The chain runs to 371 residues: Lombricine kinase (371 aa).

The Phosphagen kinase N-terminal domain occupies 1–86; sequence MPKFTARQNF…FDAVINEKHG (86 aa). Positions 113-355 constitute a Phosphagen kinase C-terminal domain; the sequence is YVKSARIRTG…GKLIEYEKLL (243 aa). ATP-binding positions include 116-120, His-179, Arg-224, Arg-280, 308-313, and Asp-323; these read SARIR and RGTGGE.

The protein belongs to the ATP:guanido phosphotransferase family. As to quaternary structure, homodimer.

The catalysed reaction is L-lombricine + ATP = N-phospho-L-lombricine + ADP + H(+). The chain is Lombricine kinase from Eisenia fetida (Red wiggler worm).